The primary structure comprises 247 residues: Cell division protein ZapD (247 aa).

The protein belongs to the ZapD family. Interacts with FtsZ.

It localises to the cytoplasm. In terms of biological role, cell division factor that enhances FtsZ-ring assembly. Directly interacts with FtsZ and promotes bundling of FtsZ protofilaments, with a reduction in FtsZ GTPase activity. In Escherichia coli O17:K52:H18 (strain UMN026 / ExPEC), this protein is Cell division protein ZapD.